Consider the following 662-residue polypeptide: DCC-interacting protein 13-beta (662 aa).

The BAR domain occupies alanine 3–valine 268. Residues leucine 277 to arginine 375 enclose the PH domain. Residues serine 486–aspartate 635 enclose the PID domain. Positions aspartate 643 to alanine 662 are disordered. Basic and acidic residues predominate over residues serine 653–alanine 662.

In terms of assembly, homodimer. Homotetramer. Binds RAB5A/Rab5 through an N-terminal domain. This interaction is essential for its recruitment to endosomal membranes as well as its role in cell proliferation. Binds subunits of the NuRD/MeCP1 complex. Interacts with FSHR; interaction is independent of follicle stimulating hormone stimulation. Interacts with APPL1; the interaction is decreased by adiponectin in a time-dependent manner. Forms a complex comprising APPL1, RUVBL2, CTNNB1, HDAC1 and HDAC2; interaction reduces interaction between CTNNB1, HDAC1, HDAC2 and RUVBL2 leading to the decrease of deacetylase activity of this complex; affects the recruitment of repressive complexes to the Wnt target genes. Interacts (via BAR domain) with TBC1D1; interaction is dependent of TBC1D1 phosphorylation at 'Ser-235'; interaction diminishes the phosphorylation of TBC1D1 at 'Thr-596', resulting in inhibition of SLC2A4 translocation and glucose uptake. Interacts with ANXA2; targets APPL2 to endosomes and acting in parallel to RAB5A. Interacts with RAB31 (in GTP-bound form); interaction contributes to or enhances recruitment of APPL2 to the phagosomes; interaction enhances Fc-gamma receptor-mediated phagocytosis through PI3K/Akt signaling in macrophages. Interacts with PIK3R1; forms a complex with PIK3R1 and APPL1. Interacts (via BAR domain) with ADIPOR1; hinders the accessibility of APPL1 to ADIPOR1; negatively regulates adiponectin signaling; ADIPOQ dissociates this interaction and facilitates the recruitment of APPL1 to ADIPOR1. Interacts (via BAR domain) with ADIPOR2; ADIPOQ dissociates this interaction.

It is found in the early endosome membrane. It localises to the nucleus. The protein localises to the cell membrane. Its subcellular location is the endosome membrane. The protein resides in the cytoplasm. It is found in the cytoplasmic vesicle. It localises to the phagosome. The protein localises to the cell projection. Its subcellular location is the ruffle. The protein resides in the ruffle membrane. It is found in the phagosome membrane. Multifunctional adapter protein that binds to various membrane receptors, nuclear factors and signaling proteins to regulate many processes, such as cell proliferation, immune response, endosomal trafficking and cell metabolism. Regulates signaling pathway leading to cell proliferation through interaction with RAB5A and subunits of the NuRD/MeCP1 complex. Plays a role in immune response by modulating phagocytosis, inflammatory and innate immune responses. In macrophages, enhances Fc-gamma receptor-mediated phagocytosis through interaction with RAB31 leading to activation of PI3K/Akt signaling. In response to LPS, modulates inflammatory responses by playing a key role on the regulation of TLR4 signaling and in the nuclear translocation of RELA/NF-kappa-B p65 and the secretion of pro- and anti-inflammatory cytokines. Also functions as a negative regulator of innate immune response via inhibition of AKT1 signaling pathway by forming a complex with APPL1 and PIK3R1. Plays a role in endosomal trafficking of TGFBR1 from the endosomes to the nucleus. Plays a role in cell metabolism by regulating adiponecting ans insulin signaling pathways and adaptative thermogenesis. In muscle, negatively regulates adiponectin-simulated glucose uptake and fatty acid oyidation by inhibiting adiponectin signaling pathway through APPL1 sequestration thereby antagonizing APPL1 action. In muscles, negatively regulates insulin-induced plasma membrane recruitment of GLUT4 and glucose uptake through interaction with TBC1D1. Plays a role in cold and diet-induced adaptive thermogenesis by activating ventromedial hypothalamus (VMH) neurons throught AMPK inhibition which enhances sympathetic outflow to subcutaneous white adipose tissue (sWAT), sWAT beiging and cold tolerance. Also plays a role in other signaling pathways namely Wnt/beta-catenin, HGF and glucocorticoid receptor signaling. Positive regulator of beta-catenin/TCF-dependent transcription through direct interaction with RUVBL2/reptin resulting in the relief of RUVBL2-mediated repression of beta-catenin/TCF target genes by modulating the interactions within the beta-catenin-reptin-HDAC complex. May affect adult neurogenesis in hippocampus and olfactory system via regulating the sensitivity of glucocorticoid receptor. Required for fibroblast migration through HGF cell signaling. In Rattus norvegicus (Rat), this protein is DCC-interacting protein 13-beta.